The primary structure comprises 265 residues: Translation initiation factor 2 subunit alpha (265 aa).

Positions glycine 12 to lysine 83 constitute an S1 motif domain.

Belongs to the eIF-2-alpha family. In terms of assembly, heterotrimer composed of an alpha, a beta and a gamma chain.

EIF-2 functions in the early steps of protein synthesis by forming a ternary complex with GTP and initiator tRNA. This is Translation initiation factor 2 subunit alpha from Methanobrevibacter smithii (strain ATCC 35061 / DSM 861 / OCM 144 / PS).